The following is a 289-amino-acid chain: ATP synthase gamma chain (289 aa).

Belongs to the ATPase gamma chain family. As to quaternary structure, F-type ATPases have 2 components, CF(1) - the catalytic core - and CF(0) - the membrane proton channel. CF(1) has five subunits: alpha(3), beta(3), gamma(1), delta(1), epsilon(1). CF(0) has three main subunits: a, b and c.

It is found in the cell inner membrane. Produces ATP from ADP in the presence of a proton gradient across the membrane. The gamma chain is believed to be important in regulating ATPase activity and the flow of protons through the CF(0) complex. The polypeptide is ATP synthase gamma chain (Haemophilus influenzae (strain ATCC 51907 / DSM 11121 / KW20 / Rd)).